Consider the following 171-residue polypeptide: Calcium channel flower homolog (171 aa).

Residues 1–31 (MSGSGAAGAAAGPAPPAQEEGMTWWYRWLCR) lie on the Cytoplasmic side of the membrane. The helical transmembrane segment at 32 to 52 (LAGVLGAVSCAISGLFNCVTI) threads the bilayer. Residues 53 to 56 (HPLN) lie on the Extracellular side of the membrane. The helical transmembrane segment at 57-77 (IAAGVWMIMNAFILLLCEAPF) threads the bilayer. Residues 78 to 101 (CCQFVEFANTVAEKVDRLRSWQKA) lie on the Cytoplasmic side of the membrane. The chain crosses the membrane as a helical span at residues 102-122 (VFYCGMAIVPIVMSLTLTTLL). The Extracellular portion of the chain corresponds to 123–124 (GN). Residues 125 to 141 (AIAFATGVLYGLSALGK) form a helical membrane-spanning segment. Over 142–171 (KGDAISYARIQQQRQQADEEKLAETFEGEL) the chain is Cytoplasmic.

This sequence belongs to the calcium channel flower family. In terms of assembly, interacts with adaptor protein complex 2 (AP-2). Expressed in neurons in the brain (at protein level). Expressed in neuroblastoma cell lines (at protein level). Expressed in cytotoxic T-lymphoocytes (at protein level). As to expression, low levels of expression in various tissues including the brain, eye, heart, liver and colon. Expression in the heart is at slightly higher levels than isoform 3. Expressed in skin cells. In terms of tissue distribution, very low levels of expression in the brain, liver and eye. Detected at very low levels of expression in skin cells. Expressed in various tissues, with highest levels of expression in the brain and eye. Expressed in skin cells. Low levels of expression in the liver, colon, heart and spleen. As to expression, barely detected in the brain and liver.

The protein localises to the cell membrane. It localises to the vesicle. In terms of biological role, transmembrane protein which mediates synaptic endocytosis and fitness-based cell culling. In response to different stimulus strengths, controls two major modes of synaptic vesicle (SV) retrieval in hippocampal neurons; Clathrin-mediated endocytosis (CME) in response to mild stimulation and activity-dependent bulk endocytosis (ADBE) in response to strong stimulation. In cytotoxic T-lymphoocytes (CTLs) facilitates calcium-dependent endocytosis of cytotoxic granules (CGs) at the immuno synapse. Different isoforms work as fitness fingerprints in 'loser' and 'winner' cells and thereby mediate win/lose decisions as part of the cell competition process. This Mus musculus (Mouse) protein is Calcium channel flower homolog (Cacfd1).